Reading from the N-terminus, the 496-residue chain is MFNYERPKHFIQPQNPCGSRLQPPGPEVSGFPSQTKQSSIVIQPRQCTEQRFSASSTVSSHITVSSSAYPAPQQLAGPNPGQKVTATYNQSPASFLSSILPSQPDYCNSKIPSTVDSNYQQSSVNQPVNAMSSQAANARPTPKTPDHEIQGSKEALIQDLERKLKCKDTLLHNGNQRLTYEEKMARRLLGPQNAAAVFQAQNSDVQDSPQHNPEQARLHVPTSQVRSRSSSRAEANDQDAIQEKFYPPRFIQVPENMSIEEGRFCRMDFKVSGLPAPDVSWYLNGRPVQSDELHKMIVSEKGFHSLIFEVVRASDAGPYACVARNRAGEATFTVQLDVLAKEHKRAPMFIFKPQSKKVFEGETVKLECQISAIPPPKLFWKRNNEMVQFNTDRISLYHDNAGRVTLLIKDVNKKDAGWYTVSAVNEAGVTTCNTRLDVTARPIQTLPAPKQLRVRPTFSKYLALNGRGLDVKQAFNPEGEFQRLAAQSGLYESEEL.

The segment at 1–37 is disordered; it reads MFNYERPKHFIQPQNPCGSRLQPPGPEVSGFPSQTKQ. Position 20 is an omega-N-methylarginine (Arg20). The segment at 78-149 is necessary for interaction with ACTN1; that stretch reads PNPGQKVTAT…PTPKTPDHEI (72 aa). Composition is skewed to polar residues over residues 202 to 213 and 221 to 233; these read NSDVQDSPQHNP and PTSQ…SSRA. Residues 202 to 239 are disordered; that stretch reads NSDVQDSPQHNPEQARLHVPTSQVRSRSSSRAEANDQD. The interval 213–491 is necessary for interaction with FLNC; that stretch reads PEQARLHVPT…QRLAAQSGLY (279 aa). The necessary for interaction with ACTA1 stretch occupies residues 213–496; sequence PEQARLHVPT…QSGLYESEEL (284 aa). 2 Ig-like C2-type domains span residues 248 to 333 and 347 to 439; these read PRFI…ATFT and PMFI…LDVT.

Belongs to the myotilin/palladin family. As to quaternary structure, homodimer. Interacts with ACTA1, ACTN1, FLNA, FLNB, FLNC, and MYOZ2. Interacts with the C-terminal region of MYOZ1. In terms of tissue distribution, expressed in skeletal muscle (at protein level).

It is found in the cell membrane. It localises to the sarcolemma. The protein resides in the cytoplasm. The protein localises to the cytoskeleton. Its subcellular location is the myofibril. It is found in the sarcomere. It localises to the z line. Its function is as follows. Component of a complex of multiple actin cross-linking proteins. Involved in the control of myofibril assembly and stability at the Z lines in muscle cells. This chain is Myotilin (Myot), found in Mus musculus (Mouse).